A 1016-amino-acid chain; its full sequence is Mediator of RNA polymerase II transcription subunit 5 (1016 aa).

The protein belongs to the Mediator complex subunit 5 family. As to quaternary structure, component of the Mediator complex.

It is found in the nucleus. Its function is as follows. Component of the Mediator complex, a coactivator involved in the regulated transcription of nearly all RNA polymerase II-dependent genes. Mediator functions as a bridge to convey information from gene-specific regulatory proteins to the basal RNA polymerase II transcription machinery. Mediator is recruited to promoters by direct interactions with regulatory proteins and serves as a scaffold for the assembly of a functional preinitiation complex with RNA polymerase II and the general transcription factors. The sequence is that of Mediator of RNA polymerase II transcription subunit 5 (nut1) from Aspergillus terreus (strain NIH 2624 / FGSC A1156).